A 319-amino-acid polypeptide reads, in one-letter code: tRNA pseudouridine synthase B (319 aa).

Catalysis depends on aspartate 49, which acts as the Nucleophile.

This sequence belongs to the pseudouridine synthase TruB family. Type 1 subfamily.

The enzyme catalyses uridine(55) in tRNA = pseudouridine(55) in tRNA. In terms of biological role, responsible for synthesis of pseudouridine from uracil-55 in the psi GC loop of transfer RNAs. The polypeptide is tRNA pseudouridine synthase B (Bartonella henselae (strain ATCC 49882 / DSM 28221 / CCUG 30454 / Houston 1) (Rochalimaea henselae)).